The following is a 438-amino-acid chain: Ubiquitin carboxyl-terminal hydrolase 27 (438 aa).

Residues 78–421 (RGLINLGNTC…EGYLLFYHKQ (344 aa)) enclose the USP domain. C87 (nucleophile) is an active-site residue. H380 (proton acceptor) is an active-site residue.

It belongs to the peptidase C19 family. As to quaternary structure, interacts with phosphorylated BCL2L11 isoform BIMEL; this interaction leads to BCL2L11 deubiquitination and stabilization.

It is found in the cytoplasm. The protein localises to the cytosol. It localises to the nucleus. The catalysed reaction is Thiol-dependent hydrolysis of ester, thioester, amide, peptide and isopeptide bonds formed by the C-terminal Gly of ubiquitin (a 76-residue protein attached to proteins as an intracellular targeting signal).. In terms of biological role, deubiquitinase involved in innate antiviral immunity by mediating deubiquitination of CGAS and RIGI. Negatively regulates RIGI by mediating 'Lys-63'-linked deubiquitination of RIGI, inhibiting type I interferon signaling. Also regulates 'Lys-63'-linked ubiquitination level of MDA5/IFIH1. Acts as a positive regulator of the cGAS-STING pathway by catalyzing 'Lys-48'-linked deubiquitination of CGAS, thereby promoting its stabilization. Can reduce the levels of BCL2L11/BIM ubiquitination and stabilize BCL2L11 in response to the RAF-MAPK-degradation signal. By acting on BCL2L11 levels, may counteract the anti-apoptotic effects of MAPK activity. The sequence is that of Ubiquitin carboxyl-terminal hydrolase 27 from Mus musculus (Mouse).